The following is a 280-amino-acid chain: Succinate dehydrogenase [ubiquinone] iron-sulfur subunit, mitochondrial (280 aa).

A mitochondrion-targeting transit peptide spans 1-28; it reads MAAVVALSLRRRFPAAALGGARLQACRG. Residues 40 to 133 enclose the 2Fe-2S ferredoxin-type domain; the sequence is KKFAIYRWDP…VSKIYPLPHM (94 aa). N6-acetyllysine occurs at positions 51 and 55. The [2Fe-2S] cluster site is built by Cys93, Cys98, Cys101, and Cys113. The interval 146-218 is interaction with SDHAF1; that stretch reads FYAQYKSIEP…PAVLMQAYRW (73 aa). The 4Fe-4S ferredoxin-type domain maps to 176–206; it reads DREKLDGLYECILCACCSTSCPSYWWNGDKY. [4Fe-4S] cluster is bound by residues Cys186, Cys189, and Cys192. Residue Cys196 coordinates [3Fe-4S] cluster. Trp201 serves as a coordination point for a ubiquinone. [3Fe-4S] cluster contacts are provided by Cys243 and Cys249. Position 253 (Cys253) interacts with [4Fe-4S] cluster.

It belongs to the succinate dehydrogenase/fumarate reductase iron-sulfur protein family. As to quaternary structure, component of complex II composed of four subunits: the flavoprotein (FP) SDHA, iron-sulfur protein (IP) SDHB, and a cytochrome b560 composed of SDHC and SDHD. Interacts with SDHAF1; the interaction is required for iron-sulfur cluster incorporation into SDHB. [2Fe-2S] cluster is required as a cofactor. It depends on [3Fe-4S] cluster as a cofactor. [4Fe-4S] cluster serves as cofactor.

It is found in the mitochondrion inner membrane. It carries out the reaction a quinone + succinate = fumarate + a quinol. It catalyses the reaction (R)-malate + a quinone = enol-oxaloacetate + a quinol. The enzyme catalyses (S)-malate + a quinone = enol-oxaloacetate + a quinol. It functions in the pathway carbohydrate metabolism; tricarboxylic acid cycle; fumarate from succinate (eukaryal route): step 1/1. Its activity is regulated as follows. Enol-oxaloacetate inhibits the succinate dehydrogenase activity. In terms of biological role, iron-sulfur protein (IP) subunit of the succinate dehydrogenase complex (mitochondrial respiratory chain complex II), responsible for transferring electrons from succinate to ubiquinone (coenzyme Q). SDH also oxidizes malate to the non-canonical enol form of oxaloacetate, enol-oxaloacetate. Enol-oxaloacetate, which is a potent inhibitor of the succinate dehydrogenase activity, is further isomerized into keto-oxaloacetate. The protein is Succinate dehydrogenase [ubiquinone] iron-sulfur subunit, mitochondrial (SDHB) of Bos taurus (Bovine).